Reading from the N-terminus, the 90-residue chain is METWHMTAHGRVQGVGYRAGCAQAAIALGVRGWVRNRADGTVEVMASGTIQQLEALRNWMQAGPPAAHVARVDVEPGQGKFEDFDLRPTL.

In terms of domain architecture, Acylphosphatase-like spans 3-88; the sequence is TWHMTAHGRV…GKFEDFDLRP (86 aa). Catalysis depends on residues Arg18 and Asn36.

It belongs to the acylphosphatase family.

It catalyses the reaction an acyl phosphate + H2O = a carboxylate + phosphate + H(+). The sequence is that of Acylphosphatase (acyP) from Cupriavidus pinatubonensis (strain JMP 134 / LMG 1197) (Cupriavidus necator (strain JMP 134)).